We begin with the raw amino-acid sequence, 444 residues long: MKHFEANFDGLVGPTHNYAGLSFGNVASYSNAAQTANPKAAAKQGLQKAKALADLGMTQGVLAPQERPDLYTLRRIGFSGSDAEVIQKAAKQAPALLNACCSASSMWTANAATVSPSADTRDGKVHFTPANLVDKLHRSIEPITTANILKATFKDPHFFQHHAHLPEHAHFGDEGAANHTRLCGEYGHSGVELFVYGQEATNPNAPKPKKYPARQTLEASQAIARLHQLEDESTVFMQQNPDVIDQGVFHNDVISVGNQNVLFYHEQAFLNTDAKFDEIRRKMNADMHFVKVATSQVSIDDAVKSYLFNTQIITLPSGEMTIIAPTDCQENLAVFAYLNELVTLGTPIKQVRYYDVKQSMQNGGGPACLRLRVALNDQELAAVNQDTLMNDALFGRLNTWVEKHYRDSLSVKDLADPQLIVESRTALDELTQILKLGSVYQFQK.

Substrate is bound by residues 19–28 (AGLSFGNVAS), Asn-110, and 137–138 (HR). Glu-174 is an active-site residue. Arg-214 is a substrate binding site. Residue His-250 is part of the active site. Substrate contacts are provided by Asp-252 and Asn-362. Residue Cys-368 is the Nucleophile of the active site.

This sequence belongs to the succinylarginine dihydrolase family. In terms of assembly, homodimer.

It catalyses the reaction N(2)-succinyl-L-arginine + 2 H2O + 2 H(+) = N(2)-succinyl-L-ornithine + 2 NH4(+) + CO2. The protein operates within amino-acid degradation; L-arginine degradation via AST pathway; L-glutamate and succinate from L-arginine: step 2/5. In terms of biological role, catalyzes the hydrolysis of N(2)-succinylarginine into N(2)-succinylornithine, ammonia and CO(2). In Shewanella denitrificans (strain OS217 / ATCC BAA-1090 / DSM 15013), this protein is N-succinylarginine dihydrolase.